The following is a 250-amino-acid chain: 5-oxoprolinase subunit A (250 aa).

The protein belongs to the LamB/PxpA family. As to quaternary structure, forms a complex composed of PxpA, PxpB and PxpC.

The enzyme catalyses 5-oxo-L-proline + ATP + 2 H2O = L-glutamate + ADP + phosphate + H(+). In terms of biological role, catalyzes the cleavage of 5-oxoproline to form L-glutamate coupled to the hydrolysis of ATP to ADP and inorganic phosphate. The protein is 5-oxoprolinase subunit A of Paraburkholderia xenovorans (strain LB400).